The following is a 1370-amino-acid chain: Putative Polycomb group protein ASXL2 (1370 aa).

The region spanning 11-86 (RTWAEAAKTV…RMGVYTLKKD (76 aa)) is the HTH HARE-type domain. The disordered stretch occupies residues 92 to 216 (KELSECSEES…DSVPAKPGQM (125 aa)). Over residues 103–120 (DGQSDSHSSDNSSSSDGG) the composition is skewed to low complexity. Over residues 141–152 (PPSPPSGCPSPT) the composition is skewed to pro residues. Residue serine 150 is modified to Phosphoserine. A Nuclear localization signal motif is present at residues 178–182 (QQKKK). Residues 186–198 (CRPSMSISNQHLS) show a composition bias toward polar residues. The 110-residue stretch at 229–338 (PDSILVNTNL…FENYYGQSSG (110 aa)) folds into the DEUBAD domain. The LXXLL motif motif lies at 258-262 (LLLLL). 2 disordered regions span residues 340–487 (SLED…AGLQ) and 516–535 (QESL…SSWE). Positions 398 to 412 (QKEENQDEARPDSKS) are enriched in basic and acidic residues. 4 positions are modified to phosphoserine: serine 477, serine 524, serine 553, and serine 590. Residue arginine 594 is modified to Asymmetric dimethylarginine. Serine 601 bears the Phosphoserine mark. The span at 643–652 (IPGPGPGGGQ) shows a compositional bias: gly residues. Disordered stretches follow at residues 643–734 (IPGP…LASS), 805–891 (PKAG…SSIP), and 1103–1175 (GHAD…VSEQ). Composition is skewed to polar residues over residues 719-734 (AQLQ…LASS) and 830-839 (MTSSPVTTAS). The segment covering 849-870 (SGTATSTGSAPSSSTLPAASSL) has biased composition (low complexity). The span at 871-891 (KTPGTSANMNGPISRTSSSIP) shows a compositional bias: polar residues. A compositionally biased stretch (acidic residues) spans 1119–1131 (DESDEDRVGDEQE). 2 positions are modified to phosphoserine: serine 1121 and serine 1254. The segment at 1332-1369 (PSKCYCRLKAMIMCKGCGAFCHDDCIGPSKLCVSCLVV) adopts a PHD-type; atypical zinc-finger fold.

It belongs to the Asx family. In terms of assembly, core component of the polycomb repressive deubiquitinase (PR-DUB) complex, at least composed of BAP1, one of ASXL1, ASXL2 or (probably) ASXL3, and one of MBD5 or MBD6. Distinct combinations of ASXL and MBD proteins may preferentially bind specific histone modification marks. The PR-DUB core associates with a number of accessory proteins, including FOXK1, FOXK2, KDM1B, HCFC1 and OGT; KDM1B specifically associates with ASXL2 PR-DUB complexes. Interacts (via PHD domain) with MBD5 and MBD6 (via MBD domain); the interaction is probably direct and mediates association of MBD proteins with the PR-DUB core. Interacts with PPARA and PPARG.

Its subcellular location is the nucleus. Its function is as follows. Putative Polycomb group (PcG) protein. PcG proteins act by forming multiprotein complexes, which are required to maintain the transcriptionally repressive state of homeotic genes throughout development. PcG proteins are not required to initiate repression, but to maintain it during later stages of development. They probably act via methylation of histones, rendering chromatin heritably changed in its expressibility. Involved in transcriptional regulation mediated by ligand-bound nuclear hormone receptors, such as peroxisome proliferator-activated receptor gamma (PPARG). Acts as a coactivator for PPARG and enhances its adipocyte differentiation-inducing activity; the function seems to involve differential recruitment of acetylated and methylated histone H3. Non-catalytic component of the PR-DUB complex, a complex that specifically mediates deubiquitination of histone H2A monoubiquitinated at 'Lys-119' (H2AK119ub1). The PR-DUB complex is an epigenetic regulator of gene expression and acts as a transcriptional coactivator, affecting genes involved in development, cell communication, signaling, cell proliferation and cell viability. ASXL1, ASXL2 and ASXL3 function redundantly in the PR-DUB complex. The ASXL proteins are essential for chromatin recruitment and transcriptional activation of associated genes. ASXL1 and ASXL2 are important for BAP1 protein stability. In Mus musculus (Mouse), this protein is Putative Polycomb group protein ASXL2 (Asxl2).